A 522-amino-acid chain; its full sequence is Zinc finger protein 892 (522 aa).

Disordered regions lie at residues 1–22 (MEPEGRGSLFEDSDLLHAGNPK) and 96–124 (AASQKHWETIPESKELTPEKDISEEESAP). The span at 100–116 (KHWETIPESKELTPEKD) shows a compositional bias: basic and acidic residues. 10 consecutive C2H2-type zinc fingers follow at residues 221–243 (WKCNECEKAFSYYSAFVLHQRIH), 249–271 (YECNECGKAFSQSIHLTLHQRIH), 277–299 (YECHECGKAFSHRSALIRHHIIH), 305–327 (YECNECGKAFNQSSYLTQHQRIH), 333–355 (YECNECGKAFSQSTFLTQHQVIH), 361–383 (YKCNECGKAFSDRSGLIQHQRTH), 389–411 (YECNECGKAFGYCSALTQHQRTH), 417–439 (YKCNDCAKAFSDRSALIRHQRTH), 445–467 (YKCKDCGKAFSQSSSLTKHQKTH), and 473–495 (YKCKECGKAFSQSSSLSQHQKTH).

The protein belongs to the krueppel C2H2-type zinc-finger protein family.

Its subcellular location is the nucleus. May be involved in transcriptional regulation. The polypeptide is Zinc finger protein 892 (Homo sapiens (Human)).